The chain runs to 329 residues: DNA-directed RNA polymerase subunit alpha (329 aa).

An alpha N-terminal domain (alpha-NTD) region spans residues 1-235; it reads MQGSVTEFLK…EQLDAFVDLR (235 aa). The segment at 249 to 329 is alpha C-terminal domain (alpha-CTD); the sequence is FDPILLRPVD…NWPPASIAED (81 aa).

The protein belongs to the RNA polymerase alpha chain family. Homodimer. The RNAP catalytic core consists of 2 alpha, 1 beta, 1 beta' and 1 omega subunit. When a sigma factor is associated with the core the holoenzyme is formed, which can initiate transcription.

The enzyme catalyses RNA(n) + a ribonucleoside 5'-triphosphate = RNA(n+1) + diphosphate. In terms of biological role, DNA-dependent RNA polymerase catalyzes the transcription of DNA into RNA using the four ribonucleoside triphosphates as substrates. The protein is DNA-directed RNA polymerase subunit alpha of Pasteurella multocida (strain Pm70).